Reading from the N-terminus, the 73-residue chain is Small, acid-soluble spore protein C2 (73 aa).

This sequence belongs to the alpha/beta-type SASP family.

SASP are bound to spore DNA. They are double-stranded DNA-binding proteins that cause DNA to change to an a-like conformation. They protect the DNA backbone from chemical and enzymatic cleavage and are thus involved in dormant spore's high resistance to UV light. This is Small, acid-soluble spore protein C2 (SASP-C2) from Priestia megaterium (Bacillus megaterium).